The sequence spans 701 residues: Elongation factor G (701 aa).

Residues 8-290 (SLYRNIGISA…AVIDYLPAPT (283 aa)) form the tr-type G domain. Residues 17–24 (AHIDAGKT), 88–92 (DTPGH), and 142–145 (NKMD) each bind GTP.

The protein belongs to the TRAFAC class translation factor GTPase superfamily. Classic translation factor GTPase family. EF-G/EF-2 subfamily.

It is found in the cytoplasm. Functionally, catalyzes the GTP-dependent ribosomal translocation step during translation elongation. During this step, the ribosome changes from the pre-translocational (PRE) to the post-translocational (POST) state as the newly formed A-site-bound peptidyl-tRNA and P-site-bound deacylated tRNA move to the P and E sites, respectively. Catalyzes the coordinated movement of the two tRNA molecules, the mRNA and conformational changes in the ribosome. This is Elongation factor G from Haemophilus ducreyi (strain 35000HP / ATCC 700724).